The primary structure comprises 273 residues: Formamidopyrimidine-DNA glycosylase (273 aa).

Proline 2 acts as the Schiff-base intermediate with DNA in catalysis. Residue glutamate 3 is the Proton donor of the active site. The Proton donor; for beta-elimination activity role is filled by lysine 58. Histidine 91, arginine 109, and arginine 154 together coordinate DNA. The FPG-type zinc-finger motif lies at 239–273 (FCYARTGEPCRICKTPIRQIVQGQRSTFYCPNCQK). The Proton donor; for delta-elimination activity role is filled by arginine 263.

It belongs to the FPG family. As to quaternary structure, monomer. Requires Zn(2+) as cofactor.

It catalyses the reaction Hydrolysis of DNA containing ring-opened 7-methylguanine residues, releasing 2,6-diamino-4-hydroxy-5-(N-methyl)formamidopyrimidine.. The enzyme catalyses 2'-deoxyribonucleotide-(2'-deoxyribose 5'-phosphate)-2'-deoxyribonucleotide-DNA = a 3'-end 2'-deoxyribonucleotide-(2,3-dehydro-2,3-deoxyribose 5'-phosphate)-DNA + a 5'-end 5'-phospho-2'-deoxyribonucleoside-DNA + H(+). Its function is as follows. Involved in base excision repair of DNA damaged by oxidation or by mutagenic agents. Acts as a DNA glycosylase that recognizes and removes damaged bases. Has a preference for oxidized purines, such as 7,8-dihydro-8-oxoguanine (8-oxoG). Has AP (apurinic/apyrimidinic) lyase activity and introduces nicks in the DNA strand. Cleaves the DNA backbone by beta-delta elimination to generate a single-strand break at the site of the removed base with both 3'- and 5'-phosphates. This is Formamidopyrimidine-DNA glycosylase from Janthinobacterium sp. (strain Marseille) (Minibacterium massiliensis).